A 286-amino-acid polypeptide reads, in one-letter code: MAEITAKLVKELREKTGAGMMDCKKALGESGGDMEKATEWLRQKGITSAEKKSGRITAEGLIHSYIHTGGRIGVLVELNCETDFVARGDTFKDLVNNIAMQIAACPNVEYVRVEDIPEAVAQKEKEIEKGRDDLAGKPENIKDKIVEGRIGKRLKELSLMDQPYIKDQSITVAELIKQTIAQIGENIQVRRFVRFVLGEGIEKEEKNFAEEVAAQTGQKVEQPQAAQETAKVEPPTPETVEEVEPPVTPPAQETDSPAAETTTEPPKTTPVDKPKGSPSKKGKKKK.

Positions 82–85 (TDFV) are involved in Mg(2+) ion dislocation from EF-Tu. A disordered region spans residues 212-286 (VAAQTGQKVE…SPSKKGKKKK (75 aa)). The segment covering 215 to 227 (QTGQKVEQPQAAQ) has biased composition (polar residues). Residues 253–269 (ETDSPAAETTTEPPKTT) are compositionally biased toward low complexity.

This sequence belongs to the EF-Ts family.

It localises to the cytoplasm. Functionally, associates with the EF-Tu.GDP complex and induces the exchange of GDP to GTP. It remains bound to the aminoacyl-tRNA.EF-Tu.GTP complex up to the GTP hydrolysis stage on the ribosome. The polypeptide is Elongation factor Ts (Gloeothece citriformis (strain PCC 7424) (Cyanothece sp. (strain PCC 7424))).